The primary structure comprises 303 residues: Glutaminase (303 aa).

Residues Ser-61, Asn-111, Glu-155, Asn-162, Tyr-186, Tyr-238, and Val-256 each coordinate substrate.

This sequence belongs to the glutaminase family. Homotetramer.

The catalysed reaction is L-glutamine + H2O = L-glutamate + NH4(+). The protein is Glutaminase of Marinomonas sp. (strain MWYL1).